Consider the following 132-residue polypeptide: Glycine cleavage system H protein (132 aa).

The Lipoyl-binding domain maps to 27–109 (FATIGISAFA…FDFGWILKVK (83 aa)). The residue at position 68 (Lys68) is an N6-lipoyllysine.

This sequence belongs to the GcvH family. As to quaternary structure, the glycine cleavage system is composed of four proteins: P, T, L and H. The cofactor is (R)-lipoate.

Its function is as follows. The glycine cleavage system catalyzes the degradation of glycine. The H protein shuttles the methylamine group of glycine from the P protein to the T protein. The protein is Glycine cleavage system H protein of Rhodopirellula baltica (strain DSM 10527 / NCIMB 13988 / SH1).